Consider the following 215-residue polypeptide: MNSYIKEKMENNGYKIILIGSSGVGKSSIVHQFLFNRKISNVSPTIGAAFASKQVIAKNGKTLKLNIWDTAGQERFRSITKMYYTNSLGCLVVFDVTDRESFDDVYYWINDLRINCHTTYYILVVANKIDIDKNNWRVSENEIKKFCRDNDCDYVFASSFESDTVNNLFGKMIDKMSEIKINPDSRRNDIIYLSDKSSGIDDFIDKISQNCCYIS.

GTP is bound at residue 20 to 27; the sequence is GSSGVGKS. Residues 42-50 carry the Effector region motif; sequence VSPTIGAAF. GTP-binding positions include 69-73 and 127-130; these read DTAGQ and NKID. S-geranylgeranyl cysteine; by host attachment occurs at residues Cys-211 and Cys-212. Position 212 is a cysteine methyl ester; by host (Cys-212). Positions 213–215 are cleaved as a propeptide — removed in mature form; the sequence is YIS.

It belongs to the small GTPase superfamily. Rab family.

It is found in the host cell membrane. Its function is as follows. May be involved in protein transport. The sequence is that of Probable Rab-related GTPase from Acanthamoeba polyphaga mimivirus (APMV).